The following is a 223-amino-acid chain: MIGKLTGRLDYKGSDHALIDVGGVGYVVHCSDRTLAALPARGEVVALYTDLLVREDLLQLFGFLSPYEKEWHRLLTSVQGVGAKASMAILGTLGVEGAARAITLGDATAIKAAPGVGPKLAQRVVMELKDKAPAVMAMGGTLDDAMDDVVDDMPGESAAPAPAPQPRAPKRPASNAQAEALSALQNLGYGPSDAAQAVAQAAESASNTPELIRAALRLLAPKE.

The domain I stretch occupies residues 1-64 (MIGKLTGRLD…EDLLQLFGFL (64 aa)). Residues 65–143 (SPYEKEWHRL…AVMAMGGTLD (79 aa)) form a domain II region. The interval 144–171 (DAMDDVVDDMPGESAAPAPAPQPRAPKR) is flexible linker. Positions 148 to 177 (DVVDDMPGESAAPAPAPQPRAPKRPASNAQ) are disordered. The domain III stretch occupies residues 172 to 223 (PASNAQAEALSALQNLGYGPSDAAQAVAQAAESASNTPELIRAALRLLAPKE).

It belongs to the RuvA family. Homotetramer. Forms an RuvA(8)-RuvB(12)-Holliday junction (HJ) complex. HJ DNA is sandwiched between 2 RuvA tetramers; dsDNA enters through RuvA and exits via RuvB. An RuvB hexamer assembles on each DNA strand where it exits the tetramer. Each RuvB hexamer is contacted by two RuvA subunits (via domain III) on 2 adjacent RuvB subunits; this complex drives branch migration. In the full resolvosome a probable DNA-RuvA(4)-RuvB(12)-RuvC(2) complex forms which resolves the HJ.

Its subcellular location is the cytoplasm. Functionally, the RuvA-RuvB-RuvC complex processes Holliday junction (HJ) DNA during genetic recombination and DNA repair, while the RuvA-RuvB complex plays an important role in the rescue of blocked DNA replication forks via replication fork reversal (RFR). RuvA specifically binds to HJ cruciform DNA, conferring on it an open structure. The RuvB hexamer acts as an ATP-dependent pump, pulling dsDNA into and through the RuvAB complex. HJ branch migration allows RuvC to scan DNA until it finds its consensus sequence, where it cleaves and resolves the cruciform DNA. The sequence is that of Holliday junction branch migration complex subunit RuvA from Jannaschia sp. (strain CCS1).